Here is a 147-residue protein sequence, read N- to C-terminus: Hemoglobin subunit gamma-1 (147 aa).

The Globin domain maps to 3–147; sequence NFTAEDKAAI…VASALGSRYH (145 aa). Residue Thr13 is modified to Phosphothreonine. Ser45, Ser51, and Ser53 each carry phosphoserine. Lys60 carries the post-translational modification N6-acetyllysine. A heme b-binding site is contributed by His64. An N6-acetyllysine modification is found at Lys83. His93 contacts heme b. Cys94 bears the S-nitrosocysteine mark. Ser140 bears the Phosphoserine mark.

The protein belongs to the globin family. In terms of assembly, heterotetramer of two alpha chains and two gamma chains in fetal hemoglobin (Hb F). In terms of tissue distribution, red blood cells.

Functionally, gamma chains make up the fetal hemoglobin F, in combination with alpha chains. The protein is Hemoglobin subunit gamma-1 (HBG1) of Sapajus apella (Brown-capped capuchin).